The following is a 62-amino-acid chain: Conotoxin Gm5.2 (62 aa).

The first 22 residues, 1–22 (MRCLPVFVILLLLIASAPSVDA), serve as a signal peptide directing secretion. Positions 23-49 (QPKTKDDVPLAPLHDNIRSTLQTLRKK) are excised as a propeptide. At serine 60 the chain carries Serine amide.

Belongs to the conotoxin T superfamily. In terms of processing, contains 2 disulfide bonds that can be either 'C1-C3, C2-C4' or 'C1-C4, C2-C3', since these disulfide connectivities have been observed for conotoxins with cysteine framework V (for examples, see AC P0DQQ7 and AC P81755). As to expression, expressed by the venom duct.

It is found in the secreted. This chain is Conotoxin Gm5.2, found in Conus gloriamaris (Glory-of-the-Sea cone).